We begin with the raw amino-acid sequence, 192 residues long: uncharacterized protein (192 aa).

The Nudix hydrolase domain maps to 29–160 (HRQAAVLIPI…PLDIYRRGDS (132 aa)). Positions 67–89 (GAVDDTDASVIAAALREAEEEVA) match the Nudix box motif. Glu83 and Glu87 together coordinate Mg(2+).

The protein belongs to the Nudix hydrolase family. PCD1 subfamily. Mn(2+) is required as a cofactor. The cofactor is Mg(2+).

Probably mediates the hydrolysis of some nucleoside diphosphate derivatives. This is an uncharacterized protein from Escherichia coli (strain SE11).